The chain runs to 517 residues: MQPLSKLMAISKPQNLSLHEQREVLRADMCWQQETIPVMETHDSEASRQKFRHFQYLKVSGPHEALSQLRELCLQWLRPEIHTKKQIIEQLVLEQFLAILPEEVRTWVHLQHPNNSEDMVTLIEDVIEMLEDEGMPCKDSAPQMGSIKEKMKAGSPTGKPQEPVTFKDVVVEFSKEEWGQLDSAVKNLYRNVMLENFRNLNSLRKAHLLSKPFESLKLESRKKRWIMEKEIPRKTIFDMKSISGEESSHGVIVTRLTESGHPSSDVWKGENWLYRNQKKWDINLPQEAFIPETSYTDEEDFECSENKETFDINSVSSICAIQQGIPSRKGSPKCDKFKTQFKFNLDSVGKQHSEYEYVNDLSLRTDIRHQKSHTTMNSYECYQCGKAFCRSSSLIRHQIIHTGEKPYKCSECGRFFNRRTNLTKHQKLHAEVKACTSNKCGKAVSKSEDGNNPALHFGNNFYECVNCGKSFNRSSSLIRHQMIHTGEKPFKCKECNKAFNRSSNLVKHQKLHTRDKS.

The SCAN box domain maps to 48-126; that stretch reads RQKFRHFQYL…EDMVTLIEDV (79 aa). The KRAB domain maps to 164 to 237; it reads VTFKDVVVEF…EKEIPRKTIF (74 aa). C2H2-type zinc fingers lie at residues 379-401, 407-429, 462-484, and 490-512; these read YECYQCGKAFCRSSSLIRHQIIH, YKCSECGRFFNRRTNLTKHQKLH, YECVNCGKSFNRSSSLIRHQMIH, and FKCKECNKAFNRSSNLVKHQKLH.

The protein belongs to the krueppel C2H2-type zinc-finger protein family.

The protein localises to the nucleus. Functionally, may be involved in transcriptional regulation. The protein is Zinc finger protein 215 (ZNF215) of Pongo abelii (Sumatran orangutan).